Reading from the N-terminus, the 357-residue chain is Glutamyl endopeptidase (357 aa).

Residues 1–29 form the signal peptide; sequence MKGKFLKVSSLFVATLTTATLVSSPAANA. The propeptide occupies 30–68; the sequence is LSSKAMDNHPQQTQTDKQQTPKIQKGGNLKPLEQRERAN. The interval 33-58 is disordered; sequence KAMDNHPQQTQTDKQQTPKIQKGGNL. The segment covering 40–54 has biased composition (low complexity); it reads QQTQTDKQQTPKIQK. Catalysis depends on charge relay system residues histidine 119, aspartate 161, and serine 237. The tract at residues 282–357 is disordered; sequence NFANDDHPNN…NNNSDNPDAA (76 aa). 18 tandem repeats follow at residues 289-291, 292-294, 295-297, 298-300, 301-303, 304-306, 307-309, 310-312, 313-315, 316-318, 319-321, 322-324, 325-327, 328-330, 331-333, 337-339, 340-342, and 343-345. The tract at residues 289 to 345 is 18 X 3 AA repeats of P-[DN]-N; sequence PNNPDNPDNPNNPDNPNNPDNPNNPDNPDNPNNPDNPNNPDNPNNPDQPNNPNNPDN. The span at 291–357 shows a compositional bias: low complexity; sequence NPDNPDNPNN…NNNSDNPDAA (67 aa).

It belongs to the peptidase S1B family. Proteolytically cleaved by aureolysin (aur). This cleavage leads to the activation of SspA.

The protein resides in the secreted. The enzyme catalyses Preferential cleavage: Glu-|-Xaa, Asp-|-Xaa.. Its function is as follows. Preferentially cleaves peptide bonds on the carboxyl-terminal side of aspartate and glutamate. Along with other extracellular proteases it is involved in colonization and infection of human tissues. Required for proteolytic maturation of thiol protease SspB and inactivation of SspC, an inhibitor of SspB. It is the most important protease for degradation of fibronectin-binding protein (FnBP) and surface protein A, which are involved in adherence to host cells. May also protect bacteria against host defense mechanism by cleaving the immunoglobulin classes IgG, IgA and IgM. May be involved in the stability of secreted lipases. This Staphylococcus aureus (strain MRSA252) protein is Glutamyl endopeptidase (sspA).